The primary structure comprises 246 residues: Small ribosomal subunit protein uS2 (246 aa).

The protein belongs to the universal ribosomal protein uS2 family. Component of the small ribosomal subunit. Mature ribosomes consist of a small (40S) and a large (60S) subunit. The 40S subunit contains about 33 different proteins and 1 molecule of RNA (18S). The 60S subunit contains about 49 different proteins and 3 molecules of RNA (25S, 5.8S and 5S). Interacts with ribosomal protein S21.

It is found in the cytoplasm. In terms of biological role, required for the assembly and/or stability of the 40S ribosomal subunit. Required for the processing of the 20S rRNA-precursor to mature 18S rRNA in a late step of the maturation of 40S ribosomal subunits. The polypeptide is Small ribosomal subunit protein uS2 (Leishmania infantum).